Reading from the N-terminus, the 30-residue chain is Brevinin-2PTa (30 aa).

The cysteines at positions 24 and 30 are disulfide-linked.

Expressed by the skin glands.

The protein localises to the secreted. Its function is as follows. Has antibacterial activity against the Gram-positive bacterium S.aureus ATCC 25923 (MIC=18 uM) and the Gram-negative bacterium E.coli ATCC 25726 (MIC=18 uM). The protein is Brevinin-2PTa of Pulchrana picturata (Malaysian fire frog).